The chain runs to 258 residues: MGVEKIKAAFENGKKAFIPYVMGGDGGLEKLKERIRFLDEAGASIVEIGIPFSDPVADGPTIQRAGKRALDSGVTVKGIFQALIEVRKEVQIPFVLMTYLNPVLAFGKERFVEKCLEAGVDGIIVPDLPYEEQNIIAPLLREANIALIPLVTVTSPIERIEKITSESEGFVYAVTVAGVTGVRQNFKEEIHSYLEKVKLHVNLPVVAGFGISTKEHVEEMVTICDGVVVGSKIIELLENEKREEICELIYATKQKEEA.

Residues glutamate 47 and aspartate 58 each act as proton acceptor in the active site.

This sequence belongs to the TrpA family. Tetramer of two alpha and two beta chains.

It catalyses the reaction (1S,2R)-1-C-(indol-3-yl)glycerol 3-phosphate + L-serine = D-glyceraldehyde 3-phosphate + L-tryptophan + H2O. The protein operates within amino-acid biosynthesis; L-tryptophan biosynthesis; L-tryptophan from chorismate: step 5/5. Its function is as follows. The alpha subunit is responsible for the aldol cleavage of indoleglycerol phosphate to indole and glyceraldehyde 3-phosphate. This chain is Tryptophan synthase alpha chain, found in Bacillus cereus (strain G9842).